The primary structure comprises 580 residues: Mucolipin-1 (580 aa).

Positions 1 to 38 are disordered; the sequence is MTDPAGPRGSETERLLTPNPGYGTQVGPSPAPPTPPEE. Residues 1-65 are Cytoplasmic-facing; sequence MTDPAGPRGS…FRAKGRKPCK (65 aa). Residue serine 10 is modified to Phosphoserine. The short motif at 11–16 is the Dileucine motif; mediates targeting to lysosomes element; the sequence is ETERLL. Residues 42 to 62 are interaction with phosphoinositides; the sequence is RRRLKYFFMSPCDKFRAKGRK. The chain crosses the membrane as a helical span at residues 66–86; the sequence is LMLQVVKILVVTVQLILFGLS. The Extracellular portion of the chain corresponds to 87–298; sequence NQLAVTFREE…VFRHGDNSFR (212 aa). Positions 107–121 are extracellular/lumenal pore loop; that stretch reads LGYSDGADDTFAAYT. Cysteine 166 and cysteine 192 are joined by a disulfide. N-linked (GlcNAc...) asparagine glycosylation occurs at asparagine 230. The cysteines at positions 253 and 284 are disulfide-linked. Residues 299–321 traverse the membrane as a helical segment; the sequence is LLFDVVVILTCSLSFLLCARSLL. Over 322-350 the chain is Cytoplasmic; that stretch reads RGFLLQNEFVRFMWRQRRRVISLWERLEF. A helical transmembrane segment spans residues 351–371; the sequence is VNGWYILLVTSDVLTISGTIM. Residues 372-382 lie on the Extracellular side of the membrane; the sequence is KIGIEAKNLAS. Residues 383-405 traverse the membrane as a helical segment; that stretch reads YDVCSILLGTSTLLVWVGVIRYL. The Cytoplasmic segment spans residues 406–427; it reads TFFHNYNILIATLRVALPSVMR. A helical membrane pass occupies residues 428-448; sequence FCCCVAVIYLGYCFCGWIVLG. Topologically, residues 449 to 456 are extracellular; that stretch reads PYHVKFRS. The segment at residues 457 to 477 is an intramembrane region (pore-forming); sequence LSMVSECLFSLINGDDMFVTF. Residues 469-474 carry the Selectivity filter motif; sequence NGDDMF. The Extracellular portion of the chain corresponds to 478–491; that stretch reads AAMQAQQGRSSLVW. A helical membrane pass occupies residues 492–513; it reads LFSQLYLYSFISLFIYMVLSLF. At 514–580 the chain is on the cytoplasmic side; that stretch reads IALITGAYDT…PSEEHSLLVN (67 aa). A phosphoserine; by PAK mark is found at serine 557 and serine 559. Positions 565–567 are required for palmitoylation and association with membranes; that stretch reads CCC. A Dileucine internalization motif; mediates AP2 complex-dependent internalization motif is present at residues 573 to 578; the sequence is EEHSLL.

The protein belongs to the transient receptor (TC 1.A.4) family. Polycystin subfamily. MCOLN1 sub-subfamily. In terms of assembly, homotetramer. Homooligomer. Can heterooligomerize with MCOLN2 or MCOLN3; heteromeric assemblies have different channel properties as compared to the respective homooligomers and may be tissue-specific. Interacts with PDCD6. Interacts with TMEM163. Interacts with LAPTM4B. In terms of processing, palmitoylated; involved in association with membranes. Phosphorylation by PKA inhibits channel activity. Dephosphorylation increases activity. Post-translationally, proteolytically cleaved probably involving multiple lysosomal proteases including cathepsin B; inhibits lysosomal channel activity.

It is found in the late endosome membrane. Its subcellular location is the lysosome membrane. It localises to the cytoplasmic vesicle membrane. The protein resides in the cell projection. The protein localises to the phagocytic cup. It is found in the cytoplasmic vesicle. Its subcellular location is the phagosome membrane. It localises to the cell membrane. It catalyses the reaction Ca(2+)(in) = Ca(2+)(out). The catalysed reaction is Fe(2+)(in) = Fe(2+)(out). The enzyme catalyses Mg(2+)(in) = Mg(2+)(out). It carries out the reaction K(+)(in) = K(+)(out). It catalyses the reaction Na(+)(in) = Na(+)(out). Its activity is regulated as follows. Channel activity is controlled by multiple regulatory mechanisms in different subcellular compartments. Channel function is transiently modulated by changes in Ca(2+) in a pH-dependent manner; pH changes modify the aggregation state of unitary channels; a negative cooperativity between extracellular/lumenal Ca(2+) and H(+) is suggested. Regulated by phosphoinositides in a compartment-specific manner: in lysosomes activated by PtdIns(3,5)P2 (Phosphatidylinositol 3,5-bisphosphate) and at the plasma membrane inhibited by PtdIns(4,5)P2 (Phosphatidylinositol 4,5-bisphosphate). Functionally, nonselective cation channel probably playing a role in the regulation of membrane trafficking events and of metal homeostasis. Acts as a Ca(2+)-permeable cation channel with inwardly rectifying activity. Proposed to play a major role in Ca(2+) release from late endosome and lysosome vesicles to the cytoplasm, which is important for many lysosome-dependent cellular events, including the fusion and trafficking of these organelles, exocytosis and autophagy. Required for efficient uptake of large particles in macrophages in which Ca(2+) release from the lysosomes triggers lysosomal exocytosis. May also play a role in phagosome-lysosome fusion. Involved in lactosylceramide trafficking indicative for a role in the regulation of late endocytic membrane fusion/fission events. By mediating lysosomal Ca(2+) release is involved in regulation of mTORC1 signaling and in mTOR/TFEB-dependent lysosomal adaptation to environmental cues such as nutrient levels. Seems to act as lysosomal active oxygen species (ROS) sensor involved in ROS-induced TFEB activation and autophagy. Also functions as a Fe(2+) permeable channel in late endosomes and lysosomes. Also permeable to Mg(2+), Na(+). K(+) and Cs(+). Proposed to play a role in zinc homeostasis probably implicating its association with TMEM163. In adaptive immunity, TRPML2 and TRPML1 may play redundant roles in the function of the specialized lysosomes of B cells. In terms of biological role, may contribute to cellular lipase activity within the late endosomal pathway or at the cell surface which may be involved in processes of membrane reshaping and vesiculation, especially the growth of tubular structures. However, it is not known, whether it conveys the enzymatic activity directly, or merely facilitates the activity of an associated phospholipase. The chain is Mucolipin-1 (MCOLN1) from Macaca fascicularis (Crab-eating macaque).